The sequence spans 313 residues: 4-diphosphocytidyl-2-C-methyl-D-erythritol kinase (313 aa).

The active site involves K10. Residue 95 to 105 (PVTAGLGGGSS) coordinates ATP. The active site involves D136. Residues 289–313 (HPRVSPWRSPRSASSPSTRRSSRPT) form a disordered region. Residues 292–307 (VSPWRSPRSASSPSTR) show a composition bias toward low complexity.

This sequence belongs to the GHMP kinase family. IspE subfamily.

It catalyses the reaction 4-CDP-2-C-methyl-D-erythritol + ATP = 4-CDP-2-C-methyl-D-erythritol 2-phosphate + ADP + H(+). Its pathway is isoprenoid biosynthesis; isopentenyl diphosphate biosynthesis via DXP pathway; isopentenyl diphosphate from 1-deoxy-D-xylulose 5-phosphate: step 3/6. Catalyzes the phosphorylation of the position 2 hydroxy group of 4-diphosphocytidyl-2C-methyl-D-erythritol. This Anaeromyxobacter dehalogenans (strain 2CP-C) protein is 4-diphosphocytidyl-2-C-methyl-D-erythritol kinase.